A 341-amino-acid chain; its full sequence is Paired box protein Pax-9 (341 aa).

The paired DNA-binding region spans 4–130 (AFGEVNQLGG…SSISRILRNK (127 aa)). The segment at 7–63 (EVNQLGGVFVNGRPLPNAIRLRIVELAQLGIRPCDISRQLRVSHGCVSKILARYNET) is PAI subdomain. The segment at 82 to 130 (TVVKHIRTYKQRDPGIFAWEIRDRLLADGVCDKYNVPSVSSISRILRNK) is RED subdomain. Residues 168–189 (AAAAKVPTPPGVPAIPGSVAMP) are interaction with KDM5B.

Interacts with KDM5B.

The protein resides in the nucleus. Transcription factor required for normal development of thymus, parathyroid glands, ultimobranchial bodies, teeth, skeletal elements of skull and larynx as well as distal limbs. This is Paired box protein Pax-9 (PAX9) from Propithecus coquereli (Coquerel's sifaka).